We begin with the raw amino-acid sequence, 582 residues long: Putative BTB/POZ domain-containing protein At3g08660 (582 aa).

Positions 1–21 are disordered; that stretch reads MGSDSTLSLPSSSPPCNNRSS. Residues 36 to 103 form the BTB domain; the sequence is GDIIVVVDGE…CYGINFDITA (68 aa). The region spanning 196–466 is the NPH3 domain; the sequence is EMWTEELSAL…VRVLYTEQLR (271 aa). At Tyr-407 the chain carries Phosphotyrosine. Residues 558 to 582 are disordered; it reads GGETRQKVNRKSRSVSERKSSRSGR. The span at 571–582 shows a compositional bias: basic and acidic residues; that stretch reads SVSERKSSRSGR.

Belongs to the NPH3 family.

Its pathway is protein modification; protein ubiquitination. May act as a substrate-specific adapter of an E3 ubiquitin-protein ligase complex (CUL3-RBX1-BTB) which mediates the ubiquitination and subsequent proteasomal degradation of target proteins. The sequence is that of Putative BTB/POZ domain-containing protein At3g08660 from Arabidopsis thaliana (Mouse-ear cress).